The sequence spans 81 residues: Centromere protein X (81 aa).

M1 is subject to N-acetylmethionine.

This sequence belongs to the CENP-X/MHF2 family. Heterodimer with CENPX, sometimes called MHF; this interaction stabilizes both partners. MHF heterodimers can assemble to form tetrameric structures. MHF also coassemble with CENPT-CENPW heterodimers at centromeres to form the tetrameric CENP-T-W-S-X complex. Forms a discrete complex with FANCM and CENPX, called FANCM-MHF; this interaction, probably mediated by direct binding between CENPS and FANCM, leads to synergistic activation of double-stranded DNA binding and strongly stimulates FANCM-mediated DNA remodeling. Recruited by FANCM to the Fanconi anemia (FA) core complex, which consists of CENPS, CENPX, FANCA, FANCB, FANCC, FANCE, FANCF, FANCG, FANCL, FANCM, FAAP24 and FAAP100. The FA core complex associates with Bloom syndrome (BLM) complex, which consists of at least BLM, DNA topoisomerase 3-alpha (TOP3A), RMI1/BLAP75, RPA1/RPA70 and RPA2/RPA32. The super complex between FA and BLM is called BRAFT.

It localises to the nucleus. The protein resides in the chromosome. It is found in the centromere. The protein localises to the kinetochore. Functionally, DNA-binding component of the Fanconi anemia (FA) core complex. Required for the normal activation of the FA pathway, leading to monoubiquitination of the FANCI-FANCD2 complex in response to DNA damage, cellular resistance to DNA cross-linking drugs, and prevention of chromosomal breakage. In complex with CENPS (MHF heterodimer), crucial cofactor for FANCM in both binding and ATP-dependent remodeling of DNA. Stabilizes FANCM. In complex with CENPS and FANCM (but not other FANC proteins), rapidly recruited to blocked forks and promotes gene conversion at blocked replication forks. In complex with CENPS, CENPT and CENPW (CENP-T-W-S-X heterotetramer), involved in the formation of a functional kinetochore outer plate, which is essential for kinetochore-microtubule attachment and faithful mitotic progression. As a component of MHF and CENP-T-W-S-X complexes, binds DNA and bends it to form a nucleosome-like structure. DNA-binding function is fulfilled in the presence of CENPS, with the following preference for DNA substates: Holliday junction &gt; double-stranded &gt; splay arm &gt; single-stranded. Does not bind DNA on its own. This chain is Centromere protein X (CENPX), found in Homo sapiens (Human).